Reading from the N-terminus, the 465-residue chain is L-cystine uptake protein TcyP (465 aa).

The next 10 helical transmembrane spans lie at 3–23 (LFLT…LFYM), 34–54 (VLLA…FFAP), 73–93 (YVRF…LSAF), 105–125 (ISAL…AIGI), 184–204 (PTSA…YLGV), 224–246 (AIIM…AIMT), 263–283 (FVLA…IILA), 338–358 (LSIG…VMIA), 370–390 (FILL…GVGG), and 394–414 (FAAI…GLLI).

It belongs to the dicarboxylate/amino acid:cation symporter (DAACS) (TC 2.A.23) family.

The protein resides in the membrane. Its function is as follows. Mediates uptake of L-cystine, the oxidized form of L-cysteine. The sequence is that of L-cystine uptake protein TcyP from Shouchella clausii (strain KSM-K16) (Alkalihalobacillus clausii).